The following is a 187-amino-acid chain: dCTP deaminase (187 aa).

DCTP-binding positions include 110–115 (KSTYAR), 134–136 (TLE), glutamine 155, tyrosine 169, and glutamine 179. Catalysis depends on glutamate 136, which acts as the Proton donor/acceptor.

This sequence belongs to the dCTP deaminase family. In terms of assembly, homotrimer.

It catalyses the reaction dCTP + H2O + H(+) = dUTP + NH4(+). It functions in the pathway pyrimidine metabolism; dUMP biosynthesis; dUMP from dCTP (dUTP route): step 1/2. In terms of biological role, catalyzes the deamination of dCTP to dUTP. In Bordetella petrii (strain ATCC BAA-461 / DSM 12804 / CCUG 43448), this protein is dCTP deaminase.